Consider the following 77-residue polypeptide: Putative ankyrin repeat protein RC0956 (77 aa).

An ANK repeat occupies 8-38 (TDISPLMLASEYGQVTIVKYLLKHGNYNVKG).

The polypeptide is Putative ankyrin repeat protein RC0956 (Rickettsia conorii (strain ATCC VR-613 / Malish 7)).